The following is a 387-amino-acid chain: Galactokinase (387 aa).

33–36 (EHID) contributes to the substrate binding site. ATP is bound by residues S67 and 124–130 (GAGLSSS). Positions 130 and 162 each coordinate Mg(2+). D174 functions as the Proton acceptor in the catalytic mechanism. Residue Y224 coordinates substrate.

It belongs to the GHMP kinase family. GalK subfamily.

It localises to the cytoplasm. It carries out the reaction alpha-D-galactose + ATP = alpha-D-galactose 1-phosphate + ADP + H(+). It participates in carbohydrate metabolism; galactose metabolism. Functionally, catalyzes the transfer of the gamma-phosphate of ATP to D-galactose to form alpha-D-galactose-1-phosphate (Gal-1-P). In Clostridium perfringens (strain SM101 / Type A), this protein is Galactokinase.